The sequence spans 122 residues: Ribosomal silencing factor RsfS (122 aa).

The protein belongs to the Iojap/RsfS family. In terms of assembly, interacts with ribosomal protein uL14 (rplN).

It is found in the cytoplasm. Functions as a ribosomal silencing factor. Interacts with ribosomal protein uL14 (rplN), blocking formation of intersubunit bridge B8. Prevents association of the 30S and 50S ribosomal subunits and the formation of functional ribosomes, thus repressing translation. This is Ribosomal silencing factor RsfS from Chromobacterium violaceum (strain ATCC 12472 / DSM 30191 / JCM 1249 / CCUG 213 / NBRC 12614 / NCIMB 9131 / NCTC 9757 / MK).